The chain runs to 344 residues: Biotin synthase (344 aa).

Residues A40–R267 enclose the Radical SAM core domain. C55, C59, and C62 together coordinate [4Fe-4S] cluster. C99, C130, C190, and R262 together coordinate [2Fe-2S] cluster.

It belongs to the radical SAM superfamily. Biotin synthase family. In terms of assembly, homodimer. The cofactor is [4Fe-4S] cluster. [2Fe-2S] cluster is required as a cofactor.

The catalysed reaction is (4R,5S)-dethiobiotin + (sulfur carrier)-SH + 2 reduced [2Fe-2S]-[ferredoxin] + 2 S-adenosyl-L-methionine = (sulfur carrier)-H + biotin + 2 5'-deoxyadenosine + 2 L-methionine + 2 oxidized [2Fe-2S]-[ferredoxin]. Its pathway is cofactor biosynthesis; biotin biosynthesis; biotin from 7,8-diaminononanoate: step 2/2. In terms of biological role, catalyzes the conversion of dethiobiotin (DTB) to biotin by the insertion of a sulfur atom into dethiobiotin via a radical-based mechanism. In Xanthomonas euvesicatoria pv. vesicatoria (strain 85-10) (Xanthomonas campestris pv. vesicatoria), this protein is Biotin synthase.